The following is a 352-amino-acid chain: Ion-translocating oxidoreductase complex subunit D (352 aa).

4 helical membrane passes run 20–40 (IMLL…WFFG), 42–62 (GTLV…ALVL), 89–109 (IPPL…AIIA), and 123–143 (PAMI…TSWL). FMN phosphoryl threonine is present on T187. 5 consecutive transmembrane segments (helical) span residues 214–234 (ILAG…GLWL), 242–262 (WHIP…GWLF), 267–287 (LAAP…FFIL), 301–321 (LIFG…GGYP), and 322–342 (DGVA…DYYT).

The protein belongs to the NqrB/RnfD family. In terms of assembly, the complex is composed of six subunits: RsxA, RsxB, RsxC, RsxD, RsxE and RsxG. Requires FMN as cofactor.

The protein localises to the cell inner membrane. Its function is as follows. Part of a membrane-bound complex that couples electron transfer with translocation of ions across the membrane. Required to maintain the reduced state of SoxR. This Escherichia coli (strain ATCC 8739 / DSM 1576 / NBRC 3972 / NCIMB 8545 / WDCM 00012 / Crooks) protein is Ion-translocating oxidoreductase complex subunit D.